Here is a 294-residue protein sequence, read N- to C-terminus: MEDYTKAEILIEALPYICKFHDQKILIKYGGHAMVNEQAKNWIAKDLVLLKYVGINPIVVHGGGPEINRAMEKMGKTPEFIHGLRVTDEETLDIVKMVLIGKINGDIVSKLERYGGKSVGLSGKSGQLIKAKKKIQYLMKDSQKIEVDLGMVGEVEHVDTKLIDILVEKRYIPVISPIGVDHQGNDLNLNADIAAGDIAGAMNAQKLIMVTDVDGIMDDVNDPSTLHRRLTIPQIEDMIEKGLITGGMIPKIEACVNALDKGVQSVHIVNGKTPHAVLLEIFTEDGVGTMVVRE.

Substrate contacts are provided by residues 63-64 (GG), R85, and N188.

The protein belongs to the acetylglutamate kinase family. ArgB subfamily.

The protein localises to the cytoplasm. The enzyme catalyses N-acetyl-L-glutamate + ATP = N-acetyl-L-glutamyl 5-phosphate + ADP. Its pathway is amino-acid biosynthesis; L-arginine biosynthesis; N(2)-acetyl-L-ornithine from L-glutamate: step 2/4. Functionally, catalyzes the ATP-dependent phosphorylation of N-acetyl-L-glutamate. This chain is Acetylglutamate kinase, found in Methanococcus maripaludis (strain DSM 14266 / JCM 13030 / NBRC 101832 / S2 / LL).